Reading from the N-terminus, the 464-residue chain is Type I restriction enzyme EcoKI specificity subunit (464 aa).

Belongs to the type-I restriction system S methylase family. The type I restriction/modification system is composed of three polypeptides R, M and S. The restriction enzyme has stoichiometry R(2)M(2)S(1). The methyltransferase is composed of M(2)S(1). As to quaternary structure, (Microbial infection) Interacts with Escherichia phage T7 protein Ocr; this interaction leads to the inhibition of the methyltransferase restriction enzyme M.EcoKI composed of M(2)S(1).

Functionally, the specificity (S) subunit of a type I restriction enzyme; this subunit dictates DNA sequence specificity. The M and S subunits together form a methyltransferase (MTase) that methylates A-2 on the top and A-3 on the bottom strand of the sequence 5'-AACN(6)GTGC-3'. In the presence of the R subunit the complex can also act as an endonuclease, binding to the same target sequence but cutting the DNA some distance from this site. Whether the DNA is cut or modified depends on the methylation state of the target sequence. When the target site is unmodified, the DNA is cut. When the target site is hemimethylated, the complex acts as a maintenance MTase modifying the DNA so that both strands become methylated. After locating a non-methylated recognition site, the enzyme complex serves as a molecular motor that translocates DNA in an ATP-dependent manner until a collision occurs that triggers cleavage. The protein is Type I restriction enzyme EcoKI specificity subunit of Escherichia coli (strain K12).